The following is a 1275-amino-acid chain: Histone-lysine N-methyltransferase PRDM16 (1275 aa).

Residues 1–10 (MRSKARARKL) show a composition bias toward basic residues. Residues 1–66 (MRSKARARKL…SEDFTPKEGS (66 aa)) are disordered. The SET domain maps to 82–211 (PDFELRESSI…PGEELLVHVK (130 aa)). The segment at 230-255 (FRCDECDELFQCRLDLRRHKKYACSS) adopts a C2H2-type 1; degenerate zinc-finger fold. 5 C2H2-type zinc fingers span residues 282-304 (HECKDCERMFPNKYSLEQHMIVH), 310-332 (YKCDQCPKAFNWKSNLIRHQMSH), 338-361 (FECENCVKVFTDPSNLQRHIRSQH), 367-389 (HACPDCGKTFATSSGLKQHKHIH), and 395-417 (FICEVCHKSYTQFSNLCRHKRMH). Residues 424–446 (IKCKDCGQMFSTTSSLNKHRRFC) form a C2H2-type 7; atypical zinc finger. 2 disordered regions span residues 592-658 (VKNR…VPPG) and 789-838 (APKV…GVSE). The span at 610–625 (TTTGTDLDTTTGTGSD) shows a compositional bias: low complexity. 2 stretches are compositionally biased toward basic and acidic residues: residues 631–648 (DSDRDKGKDKGKPVESKP) and 821–835 (REPRKNHVYGERKPG). Residues 680-1038 (EEQLLTASGA…KHEHEGAPVS (359 aa)) form an interaction with CTBP1, CTBP2 and ZNF516 region. The interval 740–1275 (PFTDRALAHN…SGAFNPINHL (536 aa)) is mediates interaction with SKI and regulation of TGF-beta signaling. 3 C2H2-type zinc fingers span residues 951–973 (YTCRYCGKIFPRSANLTRHLRTH), 979–1002 (YRCKYCDRSFSISSNLQRHVRNIH), and 1008–1030 (FKCHLCNRCFGQQTNLDRHLKKH). Disordered stretches follow at residues 1027–1065 (LKKHEHEGAPVSQHSGVLTNHLGTSASSPTSESDNHALL) and 1084–1169 (EMNQ…MGFD). Residues 1038-1058 (SQHSGVLTNHLGTSASSPTSE) show a composition bias toward polar residues. Residues 1117-1133 (DVEEEEEEELEEEDDDS) are compositionally biased toward acidic residues.

It belongs to the PRDM16 family. In terms of assembly, interacts with CEBPA, CEBPB and CEBPD; the interaction is direct. Interacts with PPARG and PPARA; controls brown adipocytes. Interacts with CTBP1 and CTBP2; represses the expression of WAT-specific genes. Interacts with PPARGC1A and PPARGC1B; interaction with PPARGC1A or PPARGC1B activates the transcription of BAT-specific gene. Interacts with HDAC1, SKI and SMAD2; the interaction with SKI promotes the recruitment of SMAD3-HDAC1 complex on the promoter of TGF-beta target genes. Interacts with ZNF516; the interaction is direct and may play a role in the transcription of brown adipose tissue-specific gene. As to expression, enriched in BAT compared to WAT. Detected in heart, lung, kidney and brain. Expressed in nuclei of cardiomyocytes.

The protein resides in the nucleus. The protein localises to the cytoplasm. It catalyses the reaction L-lysyl(9)-[histone H3] + S-adenosyl-L-methionine = N(6)-methyl-L-lysyl(9)-[histone H3] + S-adenosyl-L-homocysteine + H(+). Its function is as follows. Binds DNA and functions as a transcriptional regulator. Displays histone methyltransferase activity and monomethylates 'Lys-9' of histone H3 (H3K9me1) in vitro. Probably catalyzes the monomethylation of free histone H3 in the cytoplasm which is then transported to the nucleus and incorporated into nucleosomes where SUV39H methyltransferases use it as a substrate to catalyze histone H3 'Lys-9' trimethylation. Likely to be one of the primary histone methyltransferases along with MECOM/PRDM3 that direct cytoplasmic H3K9me1 methylation. Functions in the differentiation of brown adipose tissue (BAT) which is specialized in dissipating chemical energy in the form of heat in response to cold or excess feeding while white adipose tissue (WAT) is specialized in the storage of excess energy and the control of systemic metabolism. Together with CEBPB, regulates the differentiation of myoblastic precursors into brown adipose cells. Functions as a repressor of TGF-beta signaling. The protein is Histone-lysine N-methyltransferase PRDM16 of Mus musculus (Mouse).